Here is a 485-residue protein sequence, read N- to C-terminus: NADH-quinone oxidoreductase subunit N (485 aa).

14 helical membrane passes run 8–28, 35–55, 71–91, 105–125, 127–147, 159–179, 203–223, 235–255, 271–291, 297–317, 326–346, 373–393, 408–430, and 455–475; these read LIALLPLLIVGLTVVVVMLSI, FLNATLSVIGLNAALVSLWFV, GFAMLYTGLVLLASLATCTFA, FYLLVLIASLGGILLANANHL, ALFLGIELISLPLFGLIGYAF, YTILSAAASSFLLFGMALVYA, LLAGFGLMIVGLGFKLSLAPF, PAPVSTFLATASKIAIFGVVM, VVLGIIAFASIIFGNLMALSQ, LLGYSSISHLGYLLVALIALQ, VGVYLAGYLFSSLGAFGVVSL, AAVMTVMMLSLAGIPMTLGFI, WWLVAAVVVGSAIGLYYYLRVAV, and IVVLISALLVLVLGVWPQPLI.

It belongs to the complex I subunit 2 family. As to quaternary structure, NDH-1 is composed of 13 different subunits. Subunits NuoA, H, J, K, L, M, N constitute the membrane sector of the complex.

The protein resides in the cell inner membrane. It carries out the reaction a quinone + NADH + 5 H(+)(in) = a quinol + NAD(+) + 4 H(+)(out). Its function is as follows. NDH-1 shuttles electrons from NADH, via FMN and iron-sulfur (Fe-S) centers, to quinones in the respiratory chain. The immediate electron acceptor for the enzyme in this species is believed to be ubiquinone. Couples the redox reaction to proton translocation (for every two electrons transferred, four hydrogen ions are translocated across the cytoplasmic membrane), and thus conserves the redox energy in a proton gradient. The chain is NADH-quinone oxidoreductase subunit N from Salmonella paratyphi C (strain RKS4594).